Consider the following 1069-residue polypeptide: Carbamoyl phosphate synthase large chain (1069 aa).

The interval 1–401 (MPLNKDIKKV…AFLKGIRSLE (401 aa)) is carboxyphosphate synthetic domain. ATP is bound by residues Arg129, Arg169, Gly175, Gly176, Lys208, Val210, Glu215, Gly241, Ile242, His243, Gln284, and Glu298. The ATP-grasp 1 domain maps to 133 to 327 (RDMMNRIGEP…IAKLAAKIAL (195 aa)). Gln284, Glu298, and Asn300 together coordinate Mg(2+). Mn(2+) contacts are provided by Gln284, Glu298, and Asn300. The oligomerization domain stretch occupies residues 402 to 549 (IGKYSLDHNK…YSTYEQYDEV (148 aa)). A carbamoyl phosphate synthetic domain region spans residues 550–932 (EVSNNKKVIV…ALYKGFVGAY (383 aa)). In terms of domain architecture, ATP-grasp 2 spans 674–864 (DELLERLGIS…IVDLATQVML (191 aa)). ATP contacts are provided by Arg710, Lys749, Leu751, Glu755, Gly780, Val781, His782, Ser783, Gln823, and Glu835. 3 residues coordinate Mg(2+): Gln823, Glu835, and Asn837. 3 residues coordinate Mn(2+): Gln823, Glu835, and Asn837. Residues 932 to 1069 (YMYPSKEKGK…KDLEVFNIAK (138 aa)) form the MGS-like domain. Residues 933 to 1069 (MYPSKEKGKI…KDLEVFNIAK (137 aa)) are allosteric domain.

This sequence belongs to the CarB family. Composed of two chains; the small (or glutamine) chain promotes the hydrolysis of glutamine to ammonia, which is used by the large (or ammonia) chain to synthesize carbamoyl phosphate. Tetramer of heterodimers (alpha,beta)4. It depends on Mg(2+) as a cofactor. Mn(2+) serves as cofactor.

The enzyme catalyses hydrogencarbonate + L-glutamine + 2 ATP + H2O = carbamoyl phosphate + L-glutamate + 2 ADP + phosphate + 2 H(+). The catalysed reaction is hydrogencarbonate + NH4(+) + 2 ATP = carbamoyl phosphate + 2 ADP + phosphate + 2 H(+). Its pathway is amino-acid biosynthesis; L-arginine biosynthesis; carbamoyl phosphate from bicarbonate: step 1/1. It participates in pyrimidine metabolism; UMP biosynthesis via de novo pathway; (S)-dihydroorotate from bicarbonate: step 1/3. Large subunit of the glutamine-dependent carbamoyl phosphate synthetase (CPSase). CPSase catalyzes the formation of carbamoyl phosphate from the ammonia moiety of glutamine, carbonate, and phosphate donated by ATP, constituting the first step of 2 biosynthetic pathways, one leading to arginine and/or urea and the other to pyrimidine nucleotides. The large subunit (synthetase) binds the substrates ammonia (free or transferred from glutamine from the small subunit), hydrogencarbonate and ATP and carries out an ATP-coupled ligase reaction, activating hydrogencarbonate by forming carboxy phosphate which reacts with ammonia to form carbamoyl phosphate. The chain is Carbamoyl phosphate synthase large chain from Clostridium beijerinckii (strain ATCC 51743 / NCIMB 8052) (Clostridium acetobutylicum).